A 170-amino-acid polypeptide reads, in one-letter code: Extracellular globin-3 (170 aa).

The signal sequence occupies residues 1-17 (MLRQLLVLVGLAVVCLA). Residues 23–169 (CCSEEDHRIV…ILTKISSRLN (147 aa)) form the Globin domain. Cysteines 24 and 156 form a disulfide. Residue His-119 participates in heme b binding.

Belongs to the globin family. As to quaternary structure, the extracellular hemoglobin of the earthworm consists of 12 subunits that have a hexagonal bilayer structure with a molecular weight near 3.8 million. Each one-twelfth subunit is composed primarily of disulfide linked trimers (chains A, B, and C) and monomers (chain D).

It is found in the secreted. This Lumbricus terrestris (Common earthworm) protein is Extracellular globin-3.